Consider the following 271-residue polypeptide: ATP synthase subunit a (271 aa).

Transmembrane regions (helical) follow at residues 38–58, 100–120, 146–166, 211–231, and 242–262; these read FWTLNIDSMFFSVVLGLLFLA, VIAPLALTVFVWVFLMNLMDL, DVNITLSMALGVFILIIFYSI, LFGNMYAGELIFILIAGLLPW, and AIFHILIITLQAFIFMVLTIV.

This sequence belongs to the ATPase A chain family. As to quaternary structure, F-type ATPases have 2 components, CF(1) - the catalytic core - and CF(0) - the membrane proton channel. CF(1) has five subunits: alpha(3), beta(3), gamma(1), delta(1), epsilon(1). CF(0) has three main subunits: a(1), b(2) and c(9-12). The alpha and beta chains form an alternating ring which encloses part of the gamma chain. CF(1) is attached to CF(0) by a central stalk formed by the gamma and epsilon chains, while a peripheral stalk is formed by the delta and b chains.

The protein localises to the cell inner membrane. In terms of biological role, key component of the proton channel; it plays a direct role in the translocation of protons across the membrane. The sequence is that of ATP synthase subunit a from Klebsiella pneumoniae (strain 342).